The following is a 924-amino-acid chain: Probable dipeptidyl-aminopeptidase B (924 aa).

Residues 1–104 are disordered; the sequence is MPPFTYSDDT…DQRSPGDGQR (104 aa). Over 1-111 the chain is Cytoplasmic; that stretch reads MPPFTYSDDT…GQRMDRSLRR (111 aa). Residues 9 to 23 are compositionally biased toward basic and acidic residues; the sequence is DTLRSGRDRFRDHSP. Residues 31–43 are compositionally biased toward polar residues; it reads SQETDSSASTTSI. 2 stretches are compositionally biased toward basic and acidic residues: residues 47 to 58 and 92 to 104; these read RIQERLDTKEFT and SRSD…DGQR. The helical; Signal-anchor for type II membrane protein transmembrane segment at 112 to 132 threads the bilayer; it reads WLFIVSGVLVATWVIGLFVFV. At 133 to 924 the chain is on the vacuolar side; it reads SSKAYKPSSS…GMKKRAAPTA (792 aa). 2 N-linked (GlcNAc...) asparagine glycosylation sites follow: Asn-231 and Asn-364. The active-site Charge relay system is the Ser-768. The N-linked (GlcNAc...) asparagine glycan is linked to Asn-827. Residues Asp-845 and His-878 each act as charge relay system in the active site.

This sequence belongs to the peptidase S9B family.

Its subcellular location is the vacuole membrane. It catalyses the reaction Release of an N-terminal dipeptide, Xaa-Yaa-|-Zaa-, from a polypeptide, preferentially when Yaa is Pro, provided Zaa is neither Pro nor hydroxyproline.. Functionally, type IV dipeptidyl-peptidase which removes N-terminal dipeptides sequentially from polypeptides having unsubstituted N-termini provided that the penultimate residue is proline. In Sordaria macrospora (strain ATCC MYA-333 / DSM 997 / K(L3346) / K-hell), this protein is Probable dipeptidyl-aminopeptidase B (DAPB).